Consider the following 295-residue polypeptide: Polyisoprenoid diphosphate/phosphate phosphohydrolase PLPP6 (295 aa).

Disordered stretches follow at residues 1 to 39 and 61 to 90; these read MPSP…SRFE and SESP…PEED. The Cytoplasmic segment spans residues 1-132; that stretch reads MPSPRRSMEG…ESSSWGSVRP (132 aa). Positions 16–27 are enriched in low complexity; that stretch reads SASSSSSSPGSP. 3 positions are modified to phosphoserine: Ser26, Ser36, and Ser70. Residues 133-153 form a helical membrane-spanning segment; it reads LMKLLEISGHGIPWLLGTLYC. Over 154 to 164 the chain is Lumenal; it reads LCRSDSWAGRE. The chain crosses the membrane as a helical span at residues 165 to 185; it reads VLMNLLFALLLDLLLVALIKG. The tract at residues 184-192 is phosphatase sequence motif I; that stretch reads KGLVRRRRP. Over 186–228 the chain is Cytoplasmic; the sequence is LVRRRRPAHNQMDMFVTLSVDKYSFPSGHATRAALMSRFILNH. The phosphatase sequence motif II stretch occupies residues 211-214; sequence PSGH. His214 (proton donors) is an active-site residue. A helical membrane pass occupies residues 229–249; sequence LVLAIPLRVLVVLWAFVLGLS. Positions 249 to 260 are phosphatase sequence motif III; it reads SRVMLGRHNVTD. Over 250–260 the chain is Lumenal; that stretch reads RVMLGRHNVTD. His256 acts as the Nucleophile in catalysis. The helical transmembrane segment at 261–281 threads the bilayer; sequence VAFGFFLGYMQYSIVDYCWLS. Topologically, residues 282-295 are cytoplasmic; it reads PHNAPVLFLLWSQR.

It belongs to the PA-phosphatase related phosphoesterase family. In terms of processing, phosphorylation by PKC activates the phosphatase activity towards presqualene diphosphate. As to expression, widely expressed. Expressed in most organs, in particular gastrointestinal organs, spleen, placenta, kidney, thymus and brain.

The protein resides in the endoplasmic reticulum membrane. It is found in the nucleus envelope. It localises to the nucleus inner membrane. It carries out the reaction presqualene diphosphate + H2O = presqualene phosphate + phosphate + H(+). It catalyses the reaction presqualene phosphate + H2O = presqualene alcohol + phosphate. The enzyme catalyses (2E,6E)-farnesyl diphosphate + H2O = (2E,6E)-farnesyl phosphate + phosphate + H(+). The catalysed reaction is (2E,6E)-farnesyl phosphate + H2O = (2E,6E)-farnesol + phosphate. It carries out the reaction (2E,6E,10E)-geranylgeranyl diphosphate + H2O = (2E,6E,10E)-geranylgeranyl phosphate + phosphate + H(+). It catalyses the reaction (2E,6E,10E)-geranylgeranyl phosphate + H2O = (2E,6E,10E)-geranylgeraniol + phosphate. The enzyme catalyses (2E)-geranyl diphosphate + H2O = (2E)-geranyl phosphate + phosphate + H(+). The catalysed reaction is (2E)-geranyl phosphate + H2O = (2E)-geraniol + phosphate. It carries out the reaction 1,2-dihexadecanoyl-sn-glycero-3-phosphate + H2O = 1,2-dihexadecanoyl-sn-glycerol + phosphate. Its activity is regulated as follows. Inhibited by propranolol. Not inhibited by N-ethylmaleimide or bromoenolactome. In terms of biological role, magnesium-independent polyisoprenoid diphosphatase that catalyzes the sequential dephosphorylation of presqualene, farnesyl, geranyl and geranylgeranyl diphosphates. Functions in the innate immune response through the dephosphorylation of presqualene diphosphate which acts as a potent inhibitor of the signaling pathways contributing to polymorphonuclear neutrophils activation. May regulate the biosynthesis of cholesterol and related sterols by dephosphorylating presqualene and farnesyl diphosphate, two key intermediates in this biosynthetic pathway. May also play a role in protein prenylation by acting on farnesyl diphosphate and its derivative geranylgeranyl diphosphate, two precursors for the addition of isoprenoid anchors to membrane proteins. Has a lower activity towards phosphatidic acid (PA), but through phosphatidic acid dephosphorylation may participate in the biosynthesis of phospholipids and triacylglycerols. May also act on ceramide-1-P, lysophosphatidic acid (LPA) and sphing-4-enine 1-phosphate/sphingosine-1-phosphate. This Homo sapiens (Human) protein is Polyisoprenoid diphosphate/phosphate phosphohydrolase PLPP6.